A 472-amino-acid polypeptide reads, in one-letter code: NADH-quinone oxidoreductase subunit N (472 aa).

The next 14 membrane-spanning stretches (helical) occupy residues 11 to 31 (AELSLTAVFILMFLLDLFLPA), 43 to 63 (ILLTIQLLANLWPEEVTLFGG), 67 to 87 (STPMASVLKSILTIGTILVFL), 103 to 123 (GEFYILTLSTLLGMYFMVSAG), 125 to 145 (FLLFFLGLELATVPMACLVAF), 159 to 179 (FILSALFSSGIFLYGISMIYG), 200 to 220 (VLALVFFFSGLAFKLSLVPFH), 234 to 254 (VSAYLSVISKGAAAFALMIIL), 265 to 285 (WSEILCIIIVATITIANLFAI), 293 to 313 (FMAFSSISQAGYIMLAVLAGT), 318 to 338 (ASLVYYIVVYIAANLAVFGVI), 362 to 384 (PKLTMVMTLALFSLAGIPPFAGF), 401 to 421 (LIVFIALVNTIISLYYYLLIV), and 446 to 466 (LLVCVAGIFVLGIISGVYQLL).

This sequence belongs to the complex I subunit 2 family. In terms of assembly, NDH-1 is composed of 14 different subunits. Subunits NuoA, H, J, K, L, M, N constitute the membrane sector of the complex.

Its subcellular location is the cell inner membrane. It carries out the reaction a quinone + NADH + 5 H(+)(in) = a quinol + NAD(+) + 4 H(+)(out). NDH-1 shuttles electrons from NADH, via FMN and iron-sulfur (Fe-S) centers, to quinones in the respiratory chain. The immediate electron acceptor for the enzyme in this species is believed to be a menaquinone. Couples the redox reaction to proton translocation (for every two electrons transferred, four hydrogen ions are translocated across the cytoplasmic membrane), and thus conserves the redox energy in a proton gradient. The polypeptide is NADH-quinone oxidoreductase subunit N (Phocaeicola vulgatus (strain ATCC 8482 / DSM 1447 / JCM 5826 / CCUG 4940 / NBRC 14291 / NCTC 11154) (Bacteroides vulgatus)).